Here is a 247-residue protein sequence, read N- to C-terminus: Geranylgeranylglyceryl phosphate synthase (247 aa).

2 residues coordinate Mg(2+): Asp-23 and Ser-52. Sn-glycerol 1-phosphate-binding positions include 171-177 (YLEAGSG), 203-204 (GG), and 225-226 (GT).

Belongs to the GGGP/HepGP synthase family. Group II subfamily. It depends on Mg(2+) as a cofactor.

It is found in the cytoplasm. It carries out the reaction sn-glycerol 1-phosphate + (2E,6E,10E)-geranylgeranyl diphosphate = sn-3-O-(geranylgeranyl)glycerol 1-phosphate + diphosphate. Its pathway is membrane lipid metabolism; glycerophospholipid metabolism. Functionally, prenyltransferase that catalyzes the transfer of the geranylgeranyl moiety of geranylgeranyl diphosphate (GGPP) to the C3 hydroxyl of sn-glycerol-1-phosphate (G1P). This reaction is the first ether-bond-formation step in the biosynthesis of archaeal membrane lipids. In Methanosarcina acetivorans (strain ATCC 35395 / DSM 2834 / JCM 12185 / C2A), this protein is Geranylgeranylglyceryl phosphate synthase.